The primary structure comprises 132 residues: Small ribosomal subunit protein uS8 (132 aa).

Belongs to the universal ribosomal protein uS8 family. As to quaternary structure, part of the 30S ribosomal subunit. Contacts proteins S5 and S12.

Its function is as follows. One of the primary rRNA binding proteins, it binds directly to 16S rRNA central domain where it helps coordinate assembly of the platform of the 30S subunit. This is Small ribosomal subunit protein uS8 from Thermoanaerobacter pseudethanolicus (strain ATCC 33223 / 39E) (Clostridium thermohydrosulfuricum).